The sequence spans 193 residues: Ion-translocating oxidoreductase complex subunit A (193 aa).

The next 6 membrane-spanning stretches (helical) occupy residues 4-24 (FFFI…KFLG), 39-59 (IGMG…SWMV), 71-91 (FLRI…IEVV), 102-122 (ALGI…VALL), 134-154 (LLYG…FAGM), and 167-187 (FAGA…FMGF).

This sequence belongs to the NqrDE/RnfAE family. The complex is composed of six subunits: RnfA, RnfB, RnfC, RnfD, RnfE and RnfG.

Its subcellular location is the cellular chromatophore membrane. In terms of biological role, part of a membrane-bound complex that couples electron transfer with translocation of ions across the membrane. This Cereibacter sphaeroides (strain ATCC 17029 / ATH 2.4.9) (Rhodobacter sphaeroides) protein is Ion-translocating oxidoreductase complex subunit A.